We begin with the raw amino-acid sequence, 258 residues long: UPF0246 protein VP0504 (258 aa).

The protein belongs to the UPF0246 family.

This Vibrio parahaemolyticus serotype O3:K6 (strain RIMD 2210633) protein is UPF0246 protein VP0504.